A 265-amino-acid polypeptide reads, in one-letter code: Phosphatidylserine decarboxylase proenzyme (265 aa).

Active-site charge relay system; for autoendoproteolytic cleavage activity residues include Asp-86, His-142, and Ser-226. The Schiff-base intermediate with substrate; via pyruvic acid; for decarboxylase activity role is filled by Ser-226. At Ser-226 the chain carries Pyruvic acid (Ser); by autocatalysis.

Belongs to the phosphatidylserine decarboxylase family. PSD-B subfamily. Prokaryotic type I sub-subfamily. Heterodimer of a large membrane-associated beta subunit and a small pyruvoyl-containing alpha subunit. The cofactor is pyruvate. Post-translationally, is synthesized initially as an inactive proenzyme. Formation of the active enzyme involves a self-maturation process in which the active site pyruvoyl group is generated from an internal serine residue via an autocatalytic post-translational modification. Two non-identical subunits are generated from the proenzyme in this reaction, and the pyruvate is formed at the N-terminus of the alpha chain, which is derived from the carboxyl end of the proenzyme. The autoendoproteolytic cleavage occurs by a canonical serine protease mechanism, in which the side chain hydroxyl group of the serine supplies its oxygen atom to form the C-terminus of the beta chain, while the remainder of the serine residue undergoes an oxidative deamination to produce ammonia and the pyruvoyl prosthetic group on the alpha chain. During this reaction, the Ser that is part of the protease active site of the proenzyme becomes the pyruvoyl prosthetic group, which constitutes an essential element of the active site of the mature decarboxylase.

Its subcellular location is the cell membrane. It carries out the reaction a 1,2-diacyl-sn-glycero-3-phospho-L-serine + H(+) = a 1,2-diacyl-sn-glycero-3-phosphoethanolamine + CO2. It participates in phospholipid metabolism; phosphatidylethanolamine biosynthesis; phosphatidylethanolamine from CDP-diacylglycerol: step 2/2. Functionally, catalyzes the formation of phosphatidylethanolamine (PtdEtn) from phosphatidylserine (PtdSer). The protein is Phosphatidylserine decarboxylase proenzyme of Anoxybacillus flavithermus (strain DSM 21510 / WK1).